A 219-amino-acid chain; its full sequence is Phosphatidylserine decarboxylase proenzyme (219 aa).

S188 serves as the catalytic Schiff-base intermediate with substrate; via pyruvic acid. S188 bears the Pyruvic acid (Ser); by autocatalysis mark.

It belongs to the phosphatidylserine decarboxylase family. PSD-A subfamily. As to quaternary structure, heterodimer of a large membrane-associated beta subunit and a small pyruvoyl-containing alpha subunit. It depends on pyruvate as a cofactor. Post-translationally, is synthesized initially as an inactive proenzyme. Formation of the active enzyme involves a self-maturation process in which the active site pyruvoyl group is generated from an internal serine residue via an autocatalytic post-translational modification. Two non-identical subunits are generated from the proenzyme in this reaction, and the pyruvate is formed at the N-terminus of the alpha chain, which is derived from the carboxyl end of the proenzyme. The post-translation cleavage follows an unusual pathway, termed non-hydrolytic serinolysis, in which the side chain hydroxyl group of the serine supplies its oxygen atom to form the C-terminus of the beta chain, while the remainder of the serine residue undergoes an oxidative deamination to produce ammonia and the pyruvoyl prosthetic group on the alpha chain.

It localises to the cell membrane. It carries out the reaction a 1,2-diacyl-sn-glycero-3-phospho-L-serine + H(+) = a 1,2-diacyl-sn-glycero-3-phosphoethanolamine + CO2. Its pathway is phospholipid metabolism; phosphatidylethanolamine biosynthesis; phosphatidylethanolamine from CDP-diacylglycerol: step 2/2. In terms of biological role, catalyzes the formation of phosphatidylethanolamine (PtdEtn) from phosphatidylserine (PtdSer). The sequence is that of Phosphatidylserine decarboxylase proenzyme from Ruegeria pomeroyi (strain ATCC 700808 / DSM 15171 / DSS-3) (Silicibacter pomeroyi).